The sequence spans 604 residues: UvrABC system protein C (604 aa).

The GIY-YIG domain maps to 13-92; sequence ASPGVYLMKD…IKKYHPKYNV (80 aa). The UVR domain occupies 205–240; it reads SEIVQDLEKSIEKASKEQKFEQAGMYYRTLKLIQQA.

The protein belongs to the UvrC family. In terms of assembly, interacts with UvrB in an incision complex.

Its subcellular location is the cytoplasm. Its function is as follows. The UvrABC repair system catalyzes the recognition and processing of DNA lesions. UvrC both incises the 5' and 3' sides of the lesion. The N-terminal half is responsible for the 3' incision and the C-terminal half is responsible for the 5' incision. This chain is UvrABC system protein C, found in Chlamydia abortus (strain DSM 27085 / S26/3) (Chlamydophila abortus).